The following is a 380-amino-acid chain: uncharacterized protein (380 aa).

This is an uncharacterized protein from Sinorhizobium fredii (strain NBRC 101917 / NGR234).